Consider the following 212-residue polypeptide: SOSS complex subunit B1 (212 aa).

The segment at residues 22-92 (IVLETGRVTK…TLYTGRGGDL (71 aa)) is a DNA-binding region (OB). The disordered stretch occupies residues 110 to 212 (EPNPEYNTQQ…GKETRRSSKR (103 aa)). The segment covering 114–130 (EYNTQQAPNKSVQNNDN) has biased composition (polar residues). Position 117 is a phosphothreonine; by ATM (T117). Over residues 131 to 148 (SPTAPQATTGPPAASPAS) the composition is skewed to low complexity. Positions 149-160 (ENQNGNGLSTQL) are enriched in polar residues. Residues 166–178 (PHPSHTPSHPPST) show a composition bias toward low complexity.

It belongs to the SOSS-B family. SOSS-B1 subfamily. Component of the SOSS complex, composed of SOSS-B (SOSS-B1/NABP2 or SOSS-B2/NABP1), SOSS-A/INTS3 and SOSS-C/INIP. SOSS complexes containing SOSS-B1/NABP2 are more abundant than complexes containing SOSS-B2/NABP1. Directly interacts with ATM, SOSS-A/INTS3 and RAD51. Interacts with INTS7. Post-translationally, phosphorylated by ATM in response to DNA damage. Phosphorylation prevents degradation by the proteasome, hence stabilization of the protein and accumulation within cells. Ubiquitinated in a FBXL5-dependent manner, leading to proteasomal degradation.

The protein resides in the nucleus. Functionally, component of the SOSS complex, a multiprotein complex that functions downstream of the MRN complex to promote DNA repair and G2/M checkpoint. In the SOSS complex, acts as a sensor of single-stranded DNA that binds to single-stranded DNA, in particular to polypyrimidines. The SOSS complex associates with DNA lesions and influences diverse endpoints in the cellular DNA damage response including cell-cycle checkpoint activation, recombinational repair and maintenance of genomic stability. Required for efficient homologous recombination-dependent repair of double-strand breaks (DSBs) and ATM-dependent signaling pathways. The protein is SOSS complex subunit B1 (Nabp2) of Mus musculus (Mouse).